A 728-amino-acid polypeptide reads, in one-letter code: tRNA (guanine(27)-N(2))-dimethyltransferase (728 aa).

Acidic residues predominate over residues 1 to 10; sequence MENMAEEELL. 2 disordered regions span residues 1–78 and 98–118; these read MENM…SKRH and DVDS…SQTC. A Phosphothreonine modification is found at Thr-23. Positions 23–33 are enriched in pro residues; it reads TPAPDSAPVPA. The span at 34-46 shows a compositional bias: low complexity; sequence PAADTALDSAPTP. Over residues 47–61 the composition is skewed to pro residues; it reads DSDPAPALAPAPAPA. Ser-63 is modified (phosphoserine). Polar residues predominate over residues 101-118; that stretch reads SASSLNSDNPGTENSQTC. A Nucleolar localization signal motif is present at residues 132–136; sequence HKLRR. Residues 181–203 form a C2H2-type zinc finger; that stretch reads YHCIICSATITRRTDMLGHVKRH. The Trm1 methyltransferase domain maps to 224–683; the sequence is EILKETDTDI…APLMQFKSIL (460 aa). Arg-257, Asp-304, Asp-352, and Ala-353 together coordinate S-adenosyl-L-methionine. Zn(2+) contacts are provided by Cys-483, Cys-486, Cys-508, and Cys-510. A Glycyl lysine isopeptide (Lys-Gly) (interchain with G-Cter in SUMO2) cross-link involves residue Lys-580. Position 607 is a phosphoserine (Ser-607). A disordered region spans residues 693-728; that stretch reads GAQSEGQMPPAAEDTVTDRVEMSVSDKAEASGCRRW. A compositionally biased stretch (basic and acidic residues) spans 708–721; sequence VTDRVEMSVSDKAE.

This sequence belongs to the class I-like SAM-binding methyltransferase superfamily. Trm1 family. Expressed in various neuronal structures during embryonic development, including spinal ganglia, trigeminal nerve and ganglion, olfactory and nasopharyngeal epithelium, nuclei of the metencephalon, thalamus and medulla oblongata. Also expressed in lung, esophagus, epiglottis, ependyma, vertebral column, spinal cord and brown adipose tissue. Expression persists in the adult brain with dynamically changing patterns in cortex and cerebellum.

The protein localises to the nucleus. It localises to the nucleolus. It catalyses the reaction guanosine(27) in tRNA(Tyr) + 2 S-adenosyl-L-methionine = N(2)-dimethylguanosine(27) in tRNA(Tyr) + 2 S-adenosyl-L-homocysteine + 2 H(+). Its function is as follows. Specifically dimethylates a single guanine residue at position 27 of tRNA(Tyr) using S-adenosyl-L-methionine as donor of the methyl groups. Dimethylation at position 27 of tRNA(Tyr) is required for efficient translation of tyrosine codons. Also required to maintain 3-(3-amino-3-carboxypropyl)uridine (acp3U) in the D-loop of several cytoplasmic tRNAs. May play a role in motor coordination and exploratory behavior. The polypeptide is tRNA (guanine(27)-N(2))-dimethyltransferase (Mus musculus (Mouse)).